Consider the following 162-residue polypeptide: UPF0114 protein PSPA7_5214 (162 aa).

The next 3 helical transmembrane spans lie at 15 to 35, 53 to 73, and 136 to 156; these read LLAP…IKFF, LILV…LVMV, and LMWY…MGYL.

This sequence belongs to the UPF0114 family.

It is found in the cell membrane. The sequence is that of UPF0114 protein PSPA7_5214 from Pseudomonas paraeruginosa (strain DSM 24068 / PA7) (Pseudomonas aeruginosa (strain PA7)).